The following is a 138-amino-acid chain: Holo-[acyl-carrier-protein] synthase (138 aa).

Mg(2+)-binding residues include D8 and E56.

This sequence belongs to the P-Pant transferase superfamily. AcpS family. Mg(2+) is required as a cofactor.

It localises to the cytoplasm. It carries out the reaction apo-[ACP] + CoA = holo-[ACP] + adenosine 3',5'-bisphosphate + H(+). Functionally, transfers the 4'-phosphopantetheine moiety from coenzyme A to a Ser of acyl-carrier-protein. This is Holo-[acyl-carrier-protein] synthase from Clostridium novyi (strain NT).